A 740-amino-acid chain; its full sequence is 1,4-alpha-glucan branching enzyme GlgB (740 aa).

The active-site Nucleophile is Asp419. Residue Glu472 is the Proton donor of the active site.

Belongs to the glycosyl hydrolase 13 family. GlgB subfamily. In terms of assembly, monomer.

It carries out the reaction Transfers a segment of a (1-&gt;4)-alpha-D-glucan chain to a primary hydroxy group in a similar glucan chain.. The protein operates within glycan biosynthesis; glycogen biosynthesis. Catalyzes the formation of the alpha-1,6-glucosidic linkages in glycogen by scission of a 1,4-alpha-linked oligosaccharide from growing alpha-1,4-glucan chains and the subsequent attachment of the oligosaccharide to the alpha-1,6 position. This Thiobacillus denitrificans (strain ATCC 25259 / T1) protein is 1,4-alpha-glucan branching enzyme GlgB.